Consider the following 432-residue polypeptide: Glutamyl-tRNA reductase (432 aa).

Residues 49 to 52, serine 101, 106 to 108, and glutamine 112 each bind substrate; these read TCNR and ESQ. Cysteine 50 (nucleophile) is an active-site residue. 181–186 serves as a coordination point for NADP(+); it reads GTGETI. Residues 410 to 432 are disordered; it reads KPGYHHPTLQTTIVKTDETDPAS.

Belongs to the glutamyl-tRNA reductase family. As to quaternary structure, homodimer.

It carries out the reaction (S)-4-amino-5-oxopentanoate + tRNA(Glu) + NADP(+) = L-glutamyl-tRNA(Glu) + NADPH + H(+). It participates in porphyrin-containing compound metabolism; protoporphyrin-IX biosynthesis; 5-aminolevulinate from L-glutamyl-tRNA(Glu): step 1/2. Functionally, catalyzes the NADPH-dependent reduction of glutamyl-tRNA(Glu) to glutamate 1-semialdehyde (GSA). This is Glutamyl-tRNA reductase from Xylella fastidiosa (strain 9a5c).